Here is a 188-residue protein sequence, read N- to C-terminus: dCTP deaminase (188 aa).

DCTP is bound by residues 111 to 116, 135 to 137, Gln-156, Tyr-170, and Gln-180; these read KSTYAR and TLE. The Proton donor/acceptor role is filled by Glu-137.

Belongs to the dCTP deaminase family. As to quaternary structure, homotrimer.

It catalyses the reaction dCTP + H2O + H(+) = dUTP + NH4(+). It participates in pyrimidine metabolism; dUMP biosynthesis; dUMP from dCTP (dUTP route): step 1/2. Its function is as follows. Catalyzes the deamination of dCTP to dUTP. The polypeptide is dCTP deaminase (Neisseria meningitidis serogroup C / serotype 2a (strain ATCC 700532 / DSM 15464 / FAM18)).